Here is a 210-residue protein sequence, read N- to C-terminus: Thymidylate kinase (210 aa).

14–21 (GLDRSGKS) provides a ligand contact to ATP.

The protein belongs to the thymidylate kinase family.

The enzyme catalyses dTMP + ATP = dTDP + ADP. Its pathway is pyrimidine metabolism; dTTP biosynthesis. Its function is as follows. Catalyzes the conversion of dTMP to dTDP. In Schizosaccharomyces pombe (strain 972 / ATCC 24843) (Fission yeast), this protein is Thymidylate kinase (tmp1).